A 280-amino-acid chain; its full sequence is Bifunctional protein FolD (280 aa).

NADP(+) is bound by residues 166–168 (GRS) and serine 191.

Belongs to the tetrahydrofolate dehydrogenase/cyclohydrolase family. In terms of assembly, homodimer.

The catalysed reaction is (6R)-5,10-methylene-5,6,7,8-tetrahydrofolate + NADP(+) = (6R)-5,10-methenyltetrahydrofolate + NADPH. The enzyme catalyses (6R)-5,10-methenyltetrahydrofolate + H2O = (6R)-10-formyltetrahydrofolate + H(+). The protein operates within one-carbon metabolism; tetrahydrofolate interconversion. Catalyzes the oxidation of 5,10-methylenetetrahydrofolate to 5,10-methenyltetrahydrofolate and then the hydrolysis of 5,10-methenyltetrahydrofolate to 10-formyltetrahydrofolate. This is Bifunctional protein FolD from Teredinibacter turnerae (strain ATCC 39867 / T7901).